The primary structure comprises 281 residues: Ribosomal RNA small subunit methyltransferase A (281 aa).

S-adenosyl-L-methionine contacts are provided by Asn-35, Leu-37, Gly-62, Glu-83, Asp-107, and Asn-125.

Belongs to the class I-like SAM-binding methyltransferase superfamily. rRNA adenine N(6)-methyltransferase family. RsmA subfamily.

The protein resides in the cytoplasm. It catalyses the reaction adenosine(1518)/adenosine(1519) in 16S rRNA + 4 S-adenosyl-L-methionine = N(6)-dimethyladenosine(1518)/N(6)-dimethyladenosine(1519) in 16S rRNA + 4 S-adenosyl-L-homocysteine + 4 H(+). Functionally, specifically dimethylates two adjacent adenosines (A1518 and A1519) in the loop of a conserved hairpin near the 3'-end of 16S rRNA in the 30S particle. May play a critical role in biogenesis of 30S subunits. This is Ribosomal RNA small subunit methyltransferase A from Deinococcus geothermalis (strain DSM 11300 / CIP 105573 / AG-3a).